The sequence spans 377 residues: MSFRAPNLIRSAAGRRASQTLNLRSQVIRRRFATEGGPEITKPSSPRSSNTRYLLAGVGIAAVGAAYYFYGTGRTAHDSANKADTVVRGAVATVEAKTGLRRGKDEYQKVYNRIAETLEKEGYDDGSLAPVLLRLAWHSSGTYNKEDGTGGSNFATMRFKPEAEHSANNGLHVAREHMEKIKQEFPWISYGDLWTLGGVCAVQESGGPTIPWRPGRIDGFEAQVTPDGRLPDASQAQDHLRFIFNRMGFNDQEIVALSGAHAMGRCHTNRSGFEGPWTFSPVTFSNQYFALLRDEPWQWKKWTGPAQYEDKNTKTLMMLPTDMALLKDKSFKKYVDIYADNEEKFFSDFAKAFSKLIELGVPERQWAGEPWTLGTSD.

A mitochondrion-targeting transit peptide spans 1 to 17; the sequence is MSFRAPNLIRSAAGRRA. The active-site Proton acceptor is histidine 138. Histidine 261 is a binding site for heme b. The Tryptophan radical intermediate role is filled by tryptophan 277.

It belongs to the peroxidase family. Cytochrome c peroxidase subfamily. As to quaternary structure, forms a one-to-one complex with cytochrome c. The cofactor is heme b.

It localises to the mitochondrion matrix. The protein resides in the mitochondrion intermembrane space. The catalysed reaction is 2 Fe(II)-[cytochrome c] + H2O2 + 2 H(+) = 2 Fe(III)-[cytochrome c] + 2 H2O. Destroys radicals which are normally produced within the cells and which are toxic to biological systems. This chain is Cytochrome c peroxidase, mitochondrial (CCP1), found in Cryptococcus neoformans var. neoformans serotype D (strain JEC21 / ATCC MYA-565) (Filobasidiella neoformans).